The chain runs to 226 residues: High affinity heme transporter (226 aa).

Positions 1–20 (MISLKIYFVLIFLFLKGINS) are cleaved as a signal peptide. The heme binding stretch occupies residues 72–101 (CDTTILSETNNVTGSCYVANCANDTVLEIC). A lipid anchor (GPI-anchor amidated serine) is attached at serine 199. Positions 200–226 (SASSTIFKPSYFISCLLSVGLYLVLNF) are cleaved as a propeptide — removed in mature form.

It localises to the cell membrane. Its subcellular location is the vacuole membrane. Its function is as follows. High affinity heme transporter involved in the assimilation of exogenous heme during conditions of low cellular iron. The chain is High affinity heme transporter from Schizosaccharomyces pombe (strain 972 / ATCC 24843) (Fission yeast).